A 417-amino-acid chain; its full sequence is MAEFQSYTLNFGPQHPAAHGVLRLVLEMEGEAVRRADPHIGLLHRATEKLAESKPYNQSIGYMDRLDYVSMMCNEHGYVRAIEKLLGIEPPLRAQYIRTMMDEVTRILNHLMWLGGHGLDVGAMTAFLYTFREREDLMDVYEAVSGARMHATYYRPGGVHRDLPDQMPKYEPSAYRSDKELREMNRAREGSVLDFLDDFCERFPACVDEYETLLTENRIWKQRLVDICPVSAERAVELGFTGPLLRGSGVAWDLRKKQPYAAYDRVDFDIPVGVNGDSYDRYLVRVEEMRQSVRIIKQCVDWLRANPGPVRIDDPKVTPPTREEMKDDMESLIHHFKLFTEGYCTPPGEVYAAVEAPKGEFGVYLISDGANKPYRLKVRPPCYYHLAATDEMIRGYMLADVVTLIGSLDVVFGEVDR.

The protein belongs to the complex I 49 kDa subunit family. In terms of assembly, NDH-1 is composed of 14 different subunits. Subunits NuoB, C, D, E, F, and G constitute the peripheral sector of the complex.

It localises to the cell inner membrane. It carries out the reaction a quinone + NADH + 5 H(+)(in) = a quinol + NAD(+) + 4 H(+)(out). NDH-1 shuttles electrons from NADH, via FMN and iron-sulfur (Fe-S) centers, to quinones in the respiratory chain. The immediate electron acceptor for the enzyme in this species is believed to be ubiquinone. Couples the redox reaction to proton translocation (for every two electrons transferred, four hydrogen ions are translocated across the cytoplasmic membrane), and thus conserves the redox energy in a proton gradient. This Halorhodospira halophila (strain DSM 244 / SL1) (Ectothiorhodospira halophila (strain DSM 244 / SL1)) protein is NADH-quinone oxidoreductase subunit D.